Here is a 394-residue protein sequence, read N- to C-terminus: Junctional adhesion molecule-like (394 aa).

The signal sequence occupies residues methionine 1–glycine 19. 2 Ig-like V-type domains span residues leucine 20–valine 132 and proline 137–histidine 250. Topologically, residues leucine 20–leucine 275 are extracellular. Disulfide bonds link cysteine 42–cysteine 116 and cysteine 155–cysteine 234. N-linked (GlcNAc...) asparagine glycans are attached at residues asparagine 76 and asparagine 231. The helical transmembrane segment at valine 276 to valine 296 threads the bilayer. Over lysine 297–phenylalanine 394 the chain is Cytoplasmic. A disordered region spans residues proline 369–phenylalanine 394. Over residues arginine 372–serine 383 the composition is skewed to basic and acidic residues.

It belongs to the immunoglobulin superfamily. In terms of assembly, homodimer; active form in leukocyte-endothelial cell adhesion. Interacts (homodimeric form) with CXADR. Interacts (via cytoplasmic domain) with the PI3 kinase; upon CXADR-binding. Interacts with ITGA4 and ITGB1; integrin alpha-4/beta-1 may regulate leukocyte to endothelial cells adhesion by controlling JAML homodimerization. In terms of tissue distribution, expression is restricted to the hematopoietic tissues with the exception of liver. Expressed in fetal liver, spleen and thymus. Preferentially expressed by mature leukocytes (at protein level).

It localises to the cell membrane. The protein resides in the cell junction. Functionally, transmembrane protein of the plasma membrane of leukocytes that control their migration and activation through interaction with CXADR, a plasma membrane receptor found on adjacent epithelial and endothelial cells. The interaction between both receptors mediates the activation of gamma-delta T-cells, a subpopulation of T-cells residing in epithelia and involved in tissue homeostasis and repair. Upon epithelial CXADR-binding, JAML induces downstream cell signaling events in gamma-delta T-cells through PI3-kinase and MAP kinases. It results in proliferation and production of cytokines and growth factors by T-cells that in turn stimulate epithelial tissues repair. It also controls the transmigration of leukocytes within epithelial and endothelial tissues through adhesive interactions with epithelial and endothelial CXADR. The polypeptide is Junctional adhesion molecule-like (Homo sapiens (Human)).